The sequence spans 367 residues: Histidinol-phosphate aminotransferase (367 aa).

The residue at position 227 (Lys-227) is an N6-(pyridoxal phosphate)lysine.

It belongs to the class-II pyridoxal-phosphate-dependent aminotransferase family. Histidinol-phosphate aminotransferase subfamily. As to quaternary structure, homodimer. Pyridoxal 5'-phosphate is required as a cofactor.

It carries out the reaction L-histidinol phosphate + 2-oxoglutarate = 3-(imidazol-4-yl)-2-oxopropyl phosphate + L-glutamate. Its pathway is amino-acid biosynthesis; L-histidine biosynthesis; L-histidine from 5-phospho-alpha-D-ribose 1-diphosphate: step 7/9. The protein is Histidinol-phosphate aminotransferase of Leptospira borgpetersenii serovar Hardjo-bovis (strain JB197).